We begin with the raw amino-acid sequence, 291 residues long: MFEGVFPALITPFQRNHGKNLDLDGLRSNIAHLVAAGVHGVVPCGSTGESATLSFAEHEQVVEVTMDEAGGKVPVLAGTGSNNTSEALRFTRAAKDVGADGVLVISPYYNKPNRSGLIKHYTAIADLDIPVVVYNVPGRTGQNITPDIIAELAKHPNIVGVKEASGDLGQISTIIELTRDEDFAVISGDDNLTLPILSLGGKGVISVAANIYPRPLIEMYEAAQKGDYETAREIHFKYSPLFRAMFYESNPIPVKKAAEILGMAAGPLRLPLDEASEQTTERLKEVLSRYD.

Thr-47 serves as a coordination point for pyruvate. The Proton donor/acceptor role is filled by Tyr-134. Lys-162 functions as the Schiff-base intermediate with substrate in the catalytic mechanism. Ile-205 serves as a coordination point for pyruvate.

The protein belongs to the DapA family. Homotetramer; dimer of dimers.

Its subcellular location is the cytoplasm. It catalyses the reaction L-aspartate 4-semialdehyde + pyruvate = (2S,4S)-4-hydroxy-2,3,4,5-tetrahydrodipicolinate + H2O + H(+). The protein operates within amino-acid biosynthesis; L-lysine biosynthesis via DAP pathway; (S)-tetrahydrodipicolinate from L-aspartate: step 3/4. Functionally, catalyzes the condensation of (S)-aspartate-beta-semialdehyde [(S)-ASA] and pyruvate to 4-hydroxy-tetrahydrodipicolinate (HTPA). This is 4-hydroxy-tetrahydrodipicolinate synthase from Methanospirillum hungatei JF-1 (strain ATCC 27890 / DSM 864 / NBRC 100397 / JF-1).